The following is a 268-amino-acid chain: MKNIILQYKKKYDAGEPISVVTCYDYTFATLFNRTDVDCLLVGDSLGMVIQGNQSTLPVTLDEIIYHTKAVCKGAPDKTIIADLPFLSYQTSIEEGIRSAGRVLKETNASCVKLEGDSEFIIELTKRMTESGIPVFAHLGLTPQSVHTLGGHRVQGKTEAARNKMIRKSRELAEAGAFALLLEMVPESLGKEITESIRIPTIGIGAGKYTSGQVLVMQDLLGLNEDFHPKFLKKFGNLSGAVKEAVNAYHKEVTKREYPSEAHVFLDT.

Positions 44 and 83 each coordinate Mg(2+). 3-methyl-2-oxobutanoate is bound by residues 44–45 (DS), Asp-83, and Lys-113. Glu-115 contributes to the Mg(2+) binding site. Glu-183 acts as the Proton acceptor in catalysis.

The protein belongs to the PanB family. In terms of assembly, homodecamer; pentamer of dimers. Requires Mg(2+) as cofactor.

The protein localises to the cytoplasm. The enzyme catalyses 3-methyl-2-oxobutanoate + (6R)-5,10-methylene-5,6,7,8-tetrahydrofolate + H2O = 2-dehydropantoate + (6S)-5,6,7,8-tetrahydrofolate. It participates in cofactor biosynthesis; (R)-pantothenate biosynthesis; (R)-pantoate from 3-methyl-2-oxobutanoate: step 1/2. Catalyzes the reversible reaction in which hydroxymethyl group from 5,10-methylenetetrahydrofolate is transferred onto alpha-ketoisovalerate to form ketopantoate. This chain is 3-methyl-2-oxobutanoate hydroxymethyltransferase, found in Leptospira biflexa serovar Patoc (strain Patoc 1 / Ames).